We begin with the raw amino-acid sequence, 306 residues long: Curved DNA-binding protein (306 aa).

The J domain occupies D5–W69.

It localises to the cytoplasm. It is found in the nucleoid. In terms of biological role, DNA-binding protein that preferentially recognizes a curved DNA sequence. It is probably a functional analog of DnaJ; displays overlapping activities with DnaJ, but functions under different conditions, probably acting as a molecular chaperone in an adaptive response to environmental stresses other than heat shock. Lacks autonomous chaperone activity; binds native substrates and targets them for recognition by DnaK. Its activity is inhibited by the binding of CbpM. This chain is Curved DNA-binding protein, found in Escherichia coli O17:K52:H18 (strain UMN026 / ExPEC).